A 275-amino-acid chain; its full sequence is Tryptophan synthase alpha chain (275 aa).

Active-site proton acceptor residues include glutamate 51 and glutamate 62.

This sequence belongs to the TrpA family. Tetramer of two alpha and two beta chains.

The enzyme catalyses (1S,2R)-1-C-(indol-3-yl)glycerol 3-phosphate + L-serine = D-glyceraldehyde 3-phosphate + L-tryptophan + H2O. Its pathway is amino-acid biosynthesis; L-tryptophan biosynthesis; L-tryptophan from chorismate: step 5/5. In terms of biological role, the alpha subunit is responsible for the aldol cleavage of indoleglycerol phosphate to indole and glyceraldehyde 3-phosphate. This chain is Tryptophan synthase alpha chain, found in Caulobacter sp. (strain K31).